We begin with the raw amino-acid sequence, 800 residues long: Blood-group-substance endo-1,4-beta-galactosidase (800 aa).

The N-terminal stretch at M1–A35 is a signal peptide.

It belongs to the glycosyl hydrolase 98 family.

The protein localises to the secreted. The enzyme catalyses Endohydrolysis of (1-&gt;4)-beta-D-galactosidic linkages in blood group A and B substances.. Endo-beta-galactosidase capable of releasing both the blood group A trisaccharide (A-Tri; GalNAcalpha1--&gt;3(Fucalpha1--&gt;2)Gal) and B trisaccharide (B-Tri; Galalpha1--&gt;3(Fucalpha1--&gt;2)Gal) glycotopes from blood group A- and B-containing glycoconjugates, respectively. The sequence is that of Blood-group-substance endo-1,4-beta-galactosidase (eabC) from Clostridium perfringens.